The primary structure comprises 213 residues: Protein arginine N-methyltransferase SFM1 (213 aa).

Phosphoserine is present on residues Ser204 and Ser207.

It belongs to the class IV-like SAM-binding methyltransferase superfamily. Protein arginine N-methyltransferase SFM1 family.

The protein localises to the cytoplasm. Its function is as follows. S-adenosyl-L-methionine-dependent protein-arginine N-methyltransferase that monomethylates ribosomal protein S3 (RPS3) at 'Arg-146'. This is Protein arginine N-methyltransferase SFM1 from Saccharomyces cerevisiae (strain ATCC 204508 / S288c) (Baker's yeast).